The following is a 181-amino-acid chain: Probable mitochondrial import inner membrane translocase subunit tim-17B.1 (181 aa).

A run of 3 helical transmembrane segments spans residues 17–37, 61–81, and 109–129; these read IGSA…FGGY, GVQF…LVAI, and VMAG…GVGL. The tract at residues 137 to 181 is disordered; the sequence is AMMDPTQPPPEALDDPRSLGQKSQAEPGLDQTRPFGIPTGLPNLS.

This sequence belongs to the Tim17/Tim22/Tim23 family.

It localises to the mitochondrion inner membrane. In terms of biological role, essential component of the TIM23 complex, a complex that mediates the translocation of transit peptide-containing proteins across the mitochondrial inner membrane. The sequence is that of Probable mitochondrial import inner membrane translocase subunit tim-17B.1 from Caenorhabditis elegans.